A 257-amino-acid polypeptide reads, in one-letter code: NAD kinase (257 aa).

Aspartate 46 (proton acceptor) is an active-site residue. Residues 46–47, 116–117, aspartate 146, alanine 154, 157–162, and asparagine 218 each bind NAD(+); these read DG, NE, and TAYNLS.

This sequence belongs to the NAD kinase family. A divalent metal cation is required as a cofactor.

It localises to the cytoplasm. It catalyses the reaction NAD(+) + ATP = ADP + NADP(+) + H(+). Its function is as follows. Involved in the regulation of the intracellular balance of NAD and NADP, and is a key enzyme in the biosynthesis of NADP. Catalyzes specifically the phosphorylation on 2'-hydroxyl of the adenosine moiety of NAD to yield NADP. The chain is NAD kinase from Brucella melitensis biotype 1 (strain ATCC 23456 / CCUG 17765 / NCTC 10094 / 16M).